Consider the following 210-residue polypeptide: NAD(P)H-quinone oxidoreductase subunit I (210 aa).

2 4Fe-4S ferredoxin-type domains span residues Gly55–Val84 and Arg95–Glu124. Residues Cys64, Cys67, Cys70, Cys74, Cys104, Cys107, Cys110, and Cys114 each coordinate [4Fe-4S] cluster.

This sequence belongs to the complex I 23 kDa subunit family. As to quaternary structure, NDH-1 is composed of at least 11 different subunits. The cofactor is [4Fe-4S] cluster.

The protein localises to the cellular thylakoid membrane. The catalysed reaction is a plastoquinone + NADH + (n+1) H(+)(in) = a plastoquinol + NAD(+) + n H(+)(out). It catalyses the reaction a plastoquinone + NADPH + (n+1) H(+)(in) = a plastoquinol + NADP(+) + n H(+)(out). In terms of biological role, NDH-1 shuttles electrons from an unknown electron donor, via FMN and iron-sulfur (Fe-S) centers, to quinones in the respiratory and/or the photosynthetic chain. The immediate electron acceptor for the enzyme in this species is believed to be plastoquinone. Couples the redox reaction to proton translocation, and thus conserves the redox energy in a proton gradient. This Synechococcus sp. (strain CC9902) protein is NAD(P)H-quinone oxidoreductase subunit I.